We begin with the raw amino-acid sequence, 185 residues long: Peptide deformylase (185 aa).

Fe cation contacts are provided by cysteine 112 and histidine 155. Glutamate 156 is an active-site residue. Residue histidine 159 coordinates Fe cation.

The protein belongs to the polypeptide deformylase family. Fe(2+) is required as a cofactor.

It catalyses the reaction N-terminal N-formyl-L-methionyl-[peptide] + H2O = N-terminal L-methionyl-[peptide] + formate. In terms of biological role, removes the formyl group from the N-terminal Met of newly synthesized proteins. Requires at least a dipeptide for an efficient rate of reaction. N-terminal L-methionine is a prerequisite for activity but the enzyme has broad specificity at other positions. This Latilactobacillus sakei subsp. sakei (strain 23K) (Lactobacillus sakei subsp. sakei) protein is Peptide deformylase.